The following is a 179-amino-acid chain: Large ribosomal subunit protein uL5 (179 aa).

This sequence belongs to the universal ribosomal protein uL5 family. As to quaternary structure, part of the 50S ribosomal subunit; part of the 5S rRNA/L5/L18/L25 subcomplex. Contacts the 5S rRNA and the P site tRNA. Forms a bridge to the 30S subunit in the 70S ribosome.

Functionally, this is one of the proteins that bind and probably mediate the attachment of the 5S RNA into the large ribosomal subunit, where it forms part of the central protuberance. In the 70S ribosome it contacts protein S13 of the 30S subunit (bridge B1b), connecting the 2 subunits; this bridge is implicated in subunit movement. Contacts the P site tRNA; the 5S rRNA and some of its associated proteins might help stabilize positioning of ribosome-bound tRNAs. This is Large ribosomal subunit protein uL5 from Shewanella frigidimarina (strain NCIMB 400).